Here is a 1066-residue protein sequence, read N- to C-terminus: TBC1 domain family member 31 (1066 aa).

7 WD repeats span residues 33-74, 75-116, 117-157, 158-200, 201-248, 249-296, and 297-334; these read HNTS…LHGN, RFNL…TVTK, ELVS…LDTF, QRKR…CDTL, FCKY…ARQL, FRII…MQTC, and KLLFEIGSLDEGISSSAISPHGRYIASIMENGSLNIYS. One can recognise a Rab-GAP TBC domain in the interval 424–599; the sequence is EYPTKYRMFI…KLFDNIFSNH (176 aa). 2 coiled-coil regions span residues 728–861 and 914–948; these read QKQE…DLEE and NKCYQEVAKLLRENRRKEIEIINAMVEEEAKKWKE. Residues 989 to 998 show a composition bias toward basic and acidic residues; sequence CHKEEPRFQN. The segment at 989 to 1020 is disordered; it reads CHKEEPRFQNEQDSSCLPRTSQLNDSSEMDPS. A compositionally biased stretch (polar residues) spans 999 to 1020; that stretch reads EQDSSCLPRTSQLNDSSEMDPS. The tract at residues 1053-1056 is mediates direct interaction with PJA2; sequence RARH.

In terms of assembly, interacts with PJA2; the interaction is direct and recruits PJA2 to centrosomes. Interacts with OFD1; regulates its activity in cilium assembly. Interacts with PRKACA.

It localises to the cytoplasm. The protein resides in the cytoskeleton. The protein localises to the microtubule organizing center. It is found in the centrosome. Its subcellular location is the centriolar satellite. It localises to the cilium basal body. Molecular adapter which is involved in cilium biogenesis. Part of a functional complex including OFD1 a centriolar protein involved in cilium assembly. Could regulate the cAMP-dependent phosphorylation of OFD1, and its subsequent ubiquitination by PJA2 which ultimately leads to its proteasomal degradation. The polypeptide is TBC1 domain family member 31 (Homo sapiens (Human)).